A 297-amino-acid chain; its full sequence is Tyrosine recombinase XerD (297 aa).

One can recognise a Core-binding (CB) domain in the interval 1-86 (MKDSALIELF…AMRKLFQYLY (86 aa)). In terms of domain architecture, Tyr recombinase spans 107–291 (RLPKYLTEQQ…AKERLKHLHE (185 aa)). Catalysis depends on residues Arg147, Lys171, His243, Arg246, and His269. Residue Tyr278 is the O-(3'-phospho-DNA)-tyrosine intermediate of the active site.

Belongs to the 'phage' integrase family. XerD subfamily. Forms a cyclic heterotetrameric complex composed of two molecules of XerC and two molecules of XerD.

The protein resides in the cytoplasm. Site-specific tyrosine recombinase, which acts by catalyzing the cutting and rejoining of the recombining DNA molecules. The XerC-XerD complex is essential to convert dimers of the bacterial chromosome into monomers to permit their segregation at cell division. It also contributes to the segregational stability of plasmids. The sequence is that of Tyrosine recombinase XerD from Pasteurella multocida (strain Pm70).